A 178-amino-acid polypeptide reads, in one-letter code: Large ribosomal subunit protein uL6 (178 aa).

It belongs to the universal ribosomal protein uL6 family. Part of the 50S ribosomal subunit.

Its function is as follows. This protein binds to the 23S rRNA, and is important in its secondary structure. It is located near the subunit interface in the base of the L7/L12 stalk, and near the tRNA binding site of the peptidyltransferase center. The chain is Large ribosomal subunit protein uL6 from Kocuria rhizophila (strain ATCC 9341 / DSM 348 / NBRC 103217 / DC2201).